A 159-amino-acid polypeptide reads, in one-letter code: Transmembrane protein 88 (159 aa).

Transmembrane regions (helical) follow at residues 43 to 63 and 88 to 108; these read LLLL…MLGF and FTAL…LALA. The tract at residues 137-159 is disordered; the sequence is PQPRQIRASPGSQAVPTSGKVWV.

Belongs to the TMEM88 family. As to quaternary structure, interacts (via C-terminus) with DVL1.

The protein resides in the cell membrane. Its function is as follows. Inhibits the Wnt/beta-catenin signaling pathway. Crucial for heart development and acts downstream of GATA factors in the pre-cardiac mesoderm to specify lineage commitment of cardiomyocyte development. In Homo sapiens (Human), this protein is Transmembrane protein 88 (TMEM88).